The chain runs to 229 residues: UPF0173 metal-dependent hydrolase SAR1785 (229 aa).

It belongs to the UPF0173 family.

The polypeptide is UPF0173 metal-dependent hydrolase SAR1785 (Staphylococcus aureus (strain MRSA252)).